The chain runs to 78 residues: Large ribosomal subunit protein bL28 (78 aa).

The protein belongs to the bacterial ribosomal protein bL28 family.

The sequence is that of Large ribosomal subunit protein bL28 from Glaesserella parasuis serovar 5 (strain SH0165) (Haemophilus parasuis).